Consider the following 365-residue polypeptide: MTSRVDPANPGSELDSAIRDTLTYSNCPVPNALLTASESGFLDAAGIELDVLSGQQGTVHFTYDQPAYTRFGGEIPPLLSEGLRAPGRTRLLGITPLLGRQGFFVRDDSPITAAADLAGRRIGVSASAIRILRGQLGDYLELDPWRQTLVALGSWEARALLHTLEHGELGVDDVELVPISSPGVDVPAEQLEESATVKGADLFPDVARGQAAVLASGDVDALYSWLPWAGELQATGARPVVDLGLDERNAYASVWTVSSGLVRQRPGLVQRLVDAAVDAGLWARDHSDAVTSLHAANLGVSTGAVGQGFGADFQQRLVPRLDHDALALLERTQQFLLTNNLLQEPVALDQWAAPEFLNNSLNRHR.

Cys-27 is a catalytic residue. Cys-27, His-60, and Arg-70 together coordinate 2'-hydroxybiphenyl-2-sulfinate. The active site involves Arg-70.

The protein belongs to the DszB desulfinase family. As to quaternary structure, monomer.

The protein resides in the cytoplasm. The enzyme catalyses 2'-hydroxybiphenyl-2-sulfinate + H2O = biphenyl-2-ol + sulfite + H(+). It functions in the pathway sulfur metabolism; dibenzothiophene degradation. Functionally, catalyzes the third and final step of the '4S' desulfurization pathway that removes covalently bound sulfur from dibenzothiophene (DBT) without breaking carbon-carbon bonds. Oxidizes 2-(2'-hydroxyphenyl)benzene sulphinate (HBPS) to 2-hydroxybiphenyl (HBP) plus sulfite. The rate-limiting step of the '4S' desulfurization pathway. This Rhodococcus erythropolis (Arthrobacter picolinophilus) protein is 2'-hydroxybiphenyl-2-sulfinate desulfinase.